The chain runs to 86 residues: MANNKSAKKRAIQAEKRRQHNASRRSMMRTYMKKTVAAIAAGDKEAATAAFAVVTPILDRMATKGLIHKNKAARHKSRFFAAINAL.

Residues 1 to 27 (MANNKSAKKRAIQAEKRRQHNASRRSM) form a disordered region.

It belongs to the bacterial ribosomal protein bS20 family.

Binds directly to 16S ribosomal RNA. The polypeptide is Small ribosomal subunit protein bS20 (Vibrio cholerae serotype O1 (strain ATCC 39541 / Classical Ogawa 395 / O395)).